We begin with the raw amino-acid sequence, 388 residues long: MSVALAGSPAINATQYEPLRVMVVDDSVVIRGLISRWIEAEPDMVVAASLRTGLDAVNQVERIKPDIALLDIEMPELDGIAALPQLLAKKRDLIVIMASTLTRRNAEISFKALSLGAADYIPKPETTRESAGAEVFRHDLLQKIRHLGGKVRRRVSAPSASAPMVARVREAAAAPAAPSVASQAALVKRAFGPTAPRVLLIGSSTGGPQALMSLVAEIGPVIDRYPVLITQHMPPTFTTILAEHLMRAARRPAHEGVDGELIKPGRIYLAPGGRHMRVTRQGGQPAIALDDGPAVNFCKPAVDPLFTSAIDVWQGGIMAVVLTGMGSDGMRGGKDIVAAGGSVIAQDEASSVVWGMPGAAANAGICAAVLPLNQIGPKLVRLFSGDRS.

A Response regulatory domain is found at arginine 20–histidine 138. Aspartate 71 is subject to 4-aspartylphosphate. A CheB-type methylesterase domain is found at proline 193–aspartate 386. Active-site residues include serine 204, histidine 232, and aspartate 328.

It belongs to the CheB family. In terms of processing, phosphorylated by CheA. Phosphorylation of the N-terminal regulatory domain activates the methylesterase activity.

The protein localises to the cytoplasm. The catalysed reaction is [protein]-L-glutamate 5-O-methyl ester + H2O = L-glutamyl-[protein] + methanol + H(+). It carries out the reaction L-glutaminyl-[protein] + H2O = L-glutamyl-[protein] + NH4(+). Functionally, involved in chemotaxis. Part of a chemotaxis signal transduction system that modulates chemotaxis in response to various stimuli. Catalyzes the demethylation of specific methylglutamate residues introduced into the chemoreceptors (methyl-accepting chemotaxis proteins or MCP) by CheR. Also mediates the irreversible deamidation of specific glutamine residues to glutamic acid. This chain is Protein-glutamate methylesterase/protein-glutamine glutaminase, found in Rhodopseudomonas palustris (strain HaA2).